Reading from the N-terminus, the 117-residue chain is Ig heavy chain V region 5-76 (117 aa).

An N-terminal signal peptide occupies residues 1 to 19 (MNFVLSLIFLALILKGVQC). The interval 20–49 (EVHLVESGGGLVKPGGSLKLSCVVSGFTFN) is framework-1. A disulfide bridge links Cys-41 with Cys-115. The segment at 50–54 (KYAMS) is complementarity-determining-1. The segment at 55–68 (WVRQTPEKRLEWVA) is framework-2. The complementarity-determining-2 stretch occupies residues 69 to 85 (TISSGGLYTYYPDSVKG). The interval 86–117 (RFTISRDNAGNTLYLQMSSLRSEDTAMYYCAR) is framework-3.

In Mus musculus (Mouse), this protein is Ig heavy chain V region 5-76.